A 146-amino-acid chain; its full sequence is Transcription antitermination protein NusB (146 aa).

It belongs to the NusB family.

Involved in transcription antitermination. Required for transcription of ribosomal RNA (rRNA) genes. Binds specifically to the boxA antiterminator sequence of the ribosomal RNA (rrn) operons. This is Transcription antitermination protein NusB from Herpetosiphon aurantiacus (strain ATCC 23779 / DSM 785 / 114-95).